Consider the following 231-residue polypeptide: 2,3-bisphosphoglycerate-dependent phosphoglycerate mutase (231 aa).

Substrate is bound by residues 8 to 15 (RHGESEWN), 21 to 22 (TG), R60, 87 to 90 (ERHY), K98, 114 to 115 (RR), and 183 to 184 (GN). The Tele-phosphohistidine intermediate role is filled by H9. The Proton donor/acceptor role is filled by E87.

This sequence belongs to the phosphoglycerate mutase family. BPG-dependent PGAM subfamily.

It carries out the reaction (2R)-2-phosphoglycerate = (2R)-3-phosphoglycerate. It functions in the pathway carbohydrate degradation; glycolysis; pyruvate from D-glyceraldehyde 3-phosphate: step 3/5. Its function is as follows. Catalyzes the interconversion of 2-phosphoglycerate and 3-phosphoglycerate. In Streptococcus pyogenes serotype M49 (strain NZ131), this protein is 2,3-bisphosphoglycerate-dependent phosphoglycerate mutase.